The primary structure comprises 105 residues: V-type ATP synthase subunit F (105 aa).

The protein belongs to the V-ATPase F subunit family.

Produces ATP from ADP in the presence of a proton gradient across the membrane. In Fusobacterium nucleatum subsp. nucleatum (strain ATCC 25586 / DSM 15643 / BCRC 10681 / CIP 101130 / JCM 8532 / KCTC 2640 / LMG 13131 / VPI 4355), this protein is V-type ATP synthase subunit F.